A 90-amino-acid chain; its full sequence is Small ribosomal subunit protein uS15 (90 aa).

The protein belongs to the universal ribosomal protein uS15 family. As to quaternary structure, part of the 30S ribosomal subunit. Forms a bridge to the 50S subunit in the 70S ribosome, contacting the 23S rRNA.

Its function is as follows. One of the primary rRNA binding proteins, it binds directly to 16S rRNA where it helps nucleate assembly of the platform of the 30S subunit by binding and bridging several RNA helices of the 16S rRNA. In terms of biological role, forms an intersubunit bridge (bridge B4) with the 23S rRNA of the 50S subunit in the ribosome. This is Small ribosomal subunit protein uS15 from Helicobacter pylori (strain Shi470).